The chain runs to 238 residues: Transcriptional repressor ThaA (238 aa).

One can recognise an HTH luxR-type domain in the interval Ile169–Gly234. Positions Val193–Gln212 form a DNA-binding region, H-T-H motif.

It belongs to the autoinducer-regulated transcriptional regulatory protein family.

In terms of biological role, represses thailandamide production. This Burkholderia thailandensis (strain ATCC 700388 / DSM 13276 / CCUG 48851 / CIP 106301 / E264) protein is Transcriptional repressor ThaA.